Reading from the N-terminus, the 110-residue chain is UPF0122 protein Aflv_1766 (110 aa).

Belongs to the UPF0122 family.

Functionally, might take part in the signal recognition particle (SRP) pathway. This is inferred from the conservation of its genetic proximity to ftsY/ffh. May be a regulatory protein. This is UPF0122 protein Aflv_1766 from Anoxybacillus flavithermus (strain DSM 21510 / WK1).